The chain runs to 550 residues: Protein UshA (550 aa).

Residues 1–25 form the signal peptide; sequence MKFLKRGVALALLAAFALTTQPAQA. Zn(2+)-binding residues include aspartate 41, histidine 43, aspartate 84, asparagine 116, histidine 217, histidine 252, and glutamine 254. An intrachain disulfide couples cysteine 258 to cysteine 275. Substrate is bound by residues phenylalanine 429 and 498–504; that span reads FNATGGD.

Belongs to the 5'-nucleotidase family. In terms of assembly, monomer. Zn(2+) is required as a cofactor.

It localises to the periplasm. It catalyses the reaction UDP-sugar + H2O = UMP + alpha-D-aldose 1-phosphate.. The enzyme catalyses a ribonucleoside 5'-phosphate + H2O = a ribonucleoside + phosphate. In terms of biological role, degradation of external UDP-glucose to uridine monophosphate and glucose-1-phosphate, which can then be used by the cell. In Salmonella pullorum, this protein is Protein UshA (ushA).